A 238-amino-acid chain; its full sequence is MIRILVINPNSTVQMTESVKSVLDDCTPPNVQLEYLTCPPEGPKAIECVSDGVRSAAVLMKYFEDHPPQVDAFLVSCYSDHPLVTTLRETYRKPCTGIMQASILTALSLGRKVSVVTTTKRYEPLLTDGIHAMGISDSVFAGIASTGLAPLELDSKPRAEVDALLARTALRAVNEMGADVICLGCAGMTHMAHVLEKAVGPNIPIIDGTKAGVELLASLVRMNLFTSKQGVYQAVGSD.

The protein belongs to the HyuE racemase family.

This is an uncharacterized protein from Schizosaccharomyces pombe (strain 972 / ATCC 24843) (Fission yeast).